Reading from the N-terminus, the 437-residue chain is Protein PhoH2 (437 aa).

The 128-residue stretch at 7–134 folds into the PINc domain; that stretch reads RTYVLDTSVL…LVSKDIPLRV (128 aa).

This sequence in the N-terminal section; belongs to the PINc/VapC protein family. It in the C-terminal section; belongs to the PhoH family. As to quaternary structure, interacts with antitoxin PhoAT. Mg(2+) serves as cofactor.

It carries out the reaction n ATP + n H2O + wound RNA = n ADP + n phosphate + unwound RNA.. The catalysed reaction is ATP + H2O = ADP + phosphate + H(+). It catalyses the reaction GTP + H2O = GDP + phosphate + H(+). Functionally, toxic component of a type II toxin-antitoxin (TA) system. The possible cognate antitoxin is PhoAT; the toxin gene can be expressed in the absence of the antitoxin gene in an endogenous mc(2)155 double deletion. Unwinds and/or cleaves 5'-tailed RNA in vitro that starts with 5'-AC, the reaction requires hydrolyzable ATP; double-stranded (ds)RNA and dsDNA are not unwound or cleaved. Has ATPase and GTPase activities. The polypeptide is Protein PhoH2 (Mycolicibacterium smegmatis (strain ATCC 700084 / mc(2)155) (Mycobacterium smegmatis)).